Here is a 544-residue protein sequence, read N- to C-terminus: Serine/threonine-protein kinase PAK 1 (544 aa).

The interval Met-1–Leu-77 is disordered. Ser-2 is subject to N-acetylserine. Ser-21 is modified (phosphoserine; by PKB and autocatalysis). Basic and acidic residues predominate over residues Lys-68–Leu-77. The segment at Lys-70–Gln-140 is autoregulatory region. The CRIB domain maps to Ile-75–Gly-88. Positions Ile-75–Arg-105 are GTPase-binding. A Phosphothreonine; by OXSR1 modification is found at Thr-84. Ser-115 carries the post-translational modification Phosphoserine. 2 positions are modified to phosphotyrosine: Tyr-131 and Tyr-142. Residues Ser-144 and Ser-149 each carry the phosphoserine; by autocatalysis modification. Tyr-153 is modified (phosphotyrosine; by JAK2). The tract at residues Val-161–Pro-193 is disordered. At Ser-174 the chain carries Phosphoserine. Over residues Ser-174 to Gly-183 the composition is skewed to acidic residues. Phosphothreonine is present on Thr-184. Residue Ser-198 is modified to Phosphoserine; by autocatalysis. At Tyr-200 the chain carries Phosphotyrosine; by JAK2. Ser-203 carries the phosphoserine; by autocatalysis modification. A phosphothreonine mark is found at Thr-211 and Thr-218. Positions Pro-212–Glu-250 are disordered. Residues Ser-219 and Ser-222 each carry the phosphoserine modification. Residues Ser-219–Pro-230 are compositionally biased toward polar residues. 3 positions are modified to phosphothreonine: Thr-224, Thr-228, and Thr-229. One can recognise a Protein kinase domain in the interval Tyr-269–Leu-520. Ile-275 to Val-283 contacts ATP. Residue Tyr-284 is modified to Phosphotyrosine; by JAK2. Lys-298 serves as a coordination point for ATP. Catalysis depends on Asp-388, which acts as the Proton acceptor. The residue at position 422 (Thr-422) is a Phosphothreonine; by autocatalysis, BRSK2 and PDPK1.

The protein belongs to the protein kinase superfamily. STE Ser/Thr protein kinase family. STE20 subfamily. As to quaternary structure, homodimer in its autoinhibited state. Active as monomer. Interacts with GIT1. Component of cytoplasmic complexes, which also contains PXN, ARHGEF7 and GIT1. Interacts with NISCH. Interacts with DVL1; mediates the formation of a DVL1, MUSK and PAK1 ternary complex involved in AChR clustering. Binds to the caspase-cleaved p110 isoform of CDC2L1 and CDC2L2, p110C, but not the full-length proteins. Interacts with ARHGEF7. Interacts tightly with GTP-bound but not GDP-bound CDC42/P21 and RAC1. Probably found in a ternary complex composed of DSCAM, PAK1 and RAC1. Interacts with DSCAM (via cytoplasmic domain); the interaction is direct and enhanced in presence of RAC1. Interacts with SCRIB. Interacts with PDPK1. Interacts (via kinase domain) with RAF1. Interacts with NCK1 and NCK2. Interacts with TBCB. Interacts with BRSK2. Interacts with SNAI1. Interacts with CIB1 (via N-terminal region); the interaction is direct, promotes PAK1 activity and occurs in a calcium-dependent manner. Interacts with INPP5K. Interacts with gamma-tubulin. Interacts with RHOU; the interaction promotes PAK1 activation. Mg(2+) serves as cofactor. Autophosphorylated in trans, meaning that in a dimer, one kinase molecule phosphorylates the other one. Activated by autophosphorylation at Thr-422 in response to a conformation change, triggered by interaction with GTP-bound CDC42 or RAC1. Activated by phosphorylation at Thr-422 by BRSK2 and by PDPK1. Phosphorylated by JAK2 in response to PRL; this increases PAK1 kinase activity. Phosphorylated at Ser-21 by PKB/AKT; this reduces interaction with NCK1 and association with focal adhesion sites. Upon DNA damage, phosphorylated at Thr-211 and translocates to the nucleoplasm. Phosphorylated at tyrosine residues, which can be enhanced by NTN1.

It localises to the cytoplasm. The protein resides in the cell junction. Its subcellular location is the focal adhesion. It is found in the cell projection. The protein localises to the lamellipodium. It localises to the cell membrane. The protein resides in the ruffle membrane. Its subcellular location is the invadopodium. It is found in the nucleus. The protein localises to the nucleoplasm. It localises to the chromosome. The protein resides in the cytoskeleton. Its subcellular location is the microtubule organizing center. It is found in the centrosome. The catalysed reaction is L-seryl-[protein] + ATP = O-phospho-L-seryl-[protein] + ADP + H(+). It carries out the reaction L-threonyl-[protein] + ATP = O-phospho-L-threonyl-[protein] + ADP + H(+). Its activity is regulated as follows. Phosphorylation of Thr-84 by OXSR1 inhibits activation. Activated by binding small G proteins. Binding of GTP-bound CDC42 or RAC1 to the autoregulatory region releases monomers from the autoinhibited dimer, and enables activation by phosphorylation of Thr-422. Protein kinase involved in intracellular signaling pathways downstream of integrins and receptor-type kinases that plays an important role in cytoskeleton dynamics, in cell adhesion, migration, proliferation, apoptosis, mitosis, and in vesicle-mediated transport processes. Can directly phosphorylate BAD and protects cells against apoptosis. Activated by interaction with CDC42 and RAC1. Functions as a GTPase effector that links the Rho-related GTPases CDC42 and RAC1 to the JNK MAP kinase pathway. Phosphorylates and activates MAP2K1, and thereby mediates activation of downstream MAP kinases. Involved in the reorganization of the actin cytoskeleton, actin stress fibers and of focal adhesion complexes. Phosphorylates the tubulin chaperone TBCB and thereby plays a role in the regulation of microtubule biogenesis and organization of the tubulin cytoskeleton. Plays a role in the regulation of insulin secretion in response to elevated glucose levels. Part of a ternary complex that contains PAK1, DVL1 and MUSK that is important for MUSK-dependent regulation of AChR clustering during the formation of the neuromuscular junction (NMJ). Activity is inhibited in cells undergoing apoptosis, potentially due to binding of CDC2L1 and CDC2L2. Phosphorylates MYL9/MLC2. Phosphorylates RAF1 at 'Ser-338' and 'Ser-339' resulting in: activation of RAF1, stimulation of RAF1 translocation to mitochondria, phosphorylation of BAD by RAF1, and RAF1 binding to BCL2. Phosphorylates SNAI1 at 'Ser-246' promoting its transcriptional repressor activity by increasing its accumulation in the nucleus. In podocytes, promotes NR3C2 nuclear localization. Required for atypical chemokine receptor ACKR2-induced phosphorylation of LIMK1 and cofilin (CFL1) and for the up-regulation of ACKR2 from endosomal compartment to cell membrane, increasing its efficiency in chemokine uptake and degradation. In synapses, seems to mediate the regulation of F-actin cluster formation performed by SHANK3, maybe through CFL1 phosphorylation and inactivation. Plays a role in RUFY3-mediated facilitating gastric cancer cells migration and invasion. In response to DNA damage, phosphorylates MORC2 which activates its ATPase activity and facilitates chromatin remodeling. In neurons, plays a crucial role in regulating GABA(A) receptor synaptic stability and hence GABAergic inhibitory synaptic transmission through its role in F-actin stabilization. In hippocampal neurons, necessary for the formation of dendritic spines and excitatory synapses; this function is dependent on kinase activity and may be exerted by the regulation of actomyosin contractility through the phosphorylation of myosin II regulatory light chain (MLC). Along with GIT1, positively regulates microtubule nucleation during interphase. Phosphorylates FXR1, promoting its localization to stress granules and activity. Phosphorylates ILK on 'Thr-173' and 'Ser-246', promoting nuclear export of ILK. In Bos taurus (Bovine), this protein is Serine/threonine-protein kinase PAK 1.